Here is a 291-residue protein sequence, read N- to C-terminus: Venom metalloproteinase inhibitor DM43 (291 aa).

Ig-like V-type domains lie at 22-79 (TNVT…ILTS) and 114-171 (GLET…PASA). N23 is a glycosylation site (N-linked (GlcNAc...) asparagine). Intrachain disulfides connect C28/C74 and C121/C163. N156, N160, and N175 each carry an N-linked (GlcNAc...) asparagine glycan. Residues 191-288 (PKANFYILND…DSNVLELDLS (98 aa)) enclose the Ig-like V-type 3 domain. C213 and C265 are joined by a disulfide.

As to quaternary structure, homodimer. In terms of processing, N-glycosylated. In terms of tissue distribution, blood and milk.

Functionally, metalloproteinase inhibitor. This Didelphis marsupialis (Southern opossum) protein is Venom metalloproteinase inhibitor DM43.